The sequence spans 348 residues: Cylicin-2 (348 aa).

The tract at residues Lys25 to Gly347 is 31 X 3 AA repeats of K-K-X. Disordered regions lie at residues Leu35–Val59 and Pro101–Lys348. Basic and acidic residues-rich tracts occupy residues Arg103–Lys159, Lys166–Ser217, Lys238–Ile267, and Lys276–Asp342. 3 consecutive repeat copies span residues Ala157–Gly184, Ala185–Gly212, and Thr213–Asp240. Residues Ala157 to Asp240 are 3 X approximate tandem repeats.

Testis.

Its subcellular location is the cytoplasm. The protein resides in the cytoskeleton. It is found in the perinuclear theca. The protein localises to the calyx. Its function is as follows. Plays a role in the establishment of normal sperm morphology during spermatogenesis. It is required for acrosome attachment to the nuclear envelope, and proper manchette elongation and disassembly. The sequence is that of Cylicin-2 (CYLC2) from Homo sapiens (Human).